Here is an 808-residue protein sequence, read N- to C-terminus: Protein Ac66 (808 aa).

Residues 132-141 (PFSTPPPTQP) show a composition bias toward pro residues. The disordered stretch occupies residues 132-151 (PFSTPPPTQPPESNVAGVGG).

In terms of assembly, interacts with the putative E3 ligase IE0 and with viral ubiquitin/vUbi.

Its subcellular location is the host nucleus. The protein resides in the host cytoplasm. Its function is as follows. Plays an essential role in the efficient egress of nucleocapsids from the host nucleus to the cytoplasm. In Lepidoptera (butterflies and moths), this protein is Protein Ac66 (Ac66).